Consider the following 144-residue polypeptide: Large ribosomal subunit protein uL16 (144 aa).

This sequence belongs to the universal ribosomal protein uL16 family. In terms of assembly, part of the 50S ribosomal subunit.

In terms of biological role, binds 23S rRNA and is also seen to make contacts with the A and possibly P site tRNAs. In Bacillus cytotoxicus (strain DSM 22905 / CIP 110041 / 391-98 / NVH 391-98), this protein is Large ribosomal subunit protein uL16.